The primary structure comprises 277 residues: Acyl-coenzyme A thioesterase MBLAC2 (277 aa).

The Zn(2+) site is built by His80, His82, Asp84, His85, His167, Asp186, and His228.

This sequence belongs to the metallo-beta-lactamase superfamily. Glyoxalase II family. The cofactor is Zn(2+).

The protein resides in the endoplasmic reticulum membrane. It is found in the cell membrane. It catalyses the reaction hexadecanoyl-CoA + H2O = hexadecanoate + CoA + H(+). The catalysed reaction is dodecanoyl-CoA + H2O = dodecanoate + CoA + H(+). It carries out the reaction tetradecanoyl-CoA + H2O = tetradecanoate + CoA + H(+). The enzyme catalyses octadecanoyl-CoA + H2O = octadecanoate + CoA + H(+). It catalyses the reaction a beta-lactam + H2O = a substituted beta-amino acid. Its function is as follows. Acyl-CoA thioesterases are a group of enzymes that catalyze the hydrolysis of acyl-CoAs to the free fatty acid and coenzyme A (CoASH), providing the potential to regulate intracellular levels of acyl-CoAs, free fatty acids and CoASH. Has an acyl-CoA thioesterase activity towards the long chain fatty acyl-CoA thioester palmitoyl-CoA (hexadecanoyl-CoA; C16:0-CoA). Displays a substrate preference for fatty acyl-CoAs with chain-lengths C12-C18. The chain is Acyl-coenzyme A thioesterase MBLAC2 (MBLAC2) from Gallus gallus (Chicken).